Reading from the N-terminus, the 1115-residue chain is Receptor-type tyrosine-protein phosphatase H (1115 aa).

The first 27 residues, 1–27 (MAGAGGGLGVWGNLVLLGLCSWTGARA), serve as a signal peptide directing secretion. Topologically, residues 28-754 (PAPNPGRNLT…VVCHTESAGV (727 aa)) are extracellular. Fibronectin type-III domains are found at residues 32–121 (PGRN…APNP), 122–209 (VRNL…TAHN), 210–299 (PVRN…APNP), 300–387 (VRNL…TAPN), 388–477 (PVRN…VPNA), 478–563 (VTSL…TAAT), 564–666 (APNE…TYPD), and 665–749 (PDTV…VCHT). 10 N-linked (GlcNAc...) asparagine glycosylation sites follow: asparagine 35, asparagine 83, asparagine 172, asparagine 256, asparagine 285, asparagine 350, asparagine 434, asparagine 468, asparagine 556, and asparagine 642. Residues 755–775 (IAGAFVGILLFLILVGLLIFF) traverse the membrane as a helical segment. The Cytoplasmic portion of the chain corresponds to 776–1115 (LKRRNKKKQQ…AAIQAHKLEV (340 aa)). A Tyrosine-protein phosphatase domain is found at 820–1079 (FADEYQQLSL…VFLHQCILRF (260 aa)). Cysteine 1020 acts as the Phosphocysteine intermediate in catalysis. Phosphotyrosine is present on residues tyrosine 1094 and tyrosine 1102.

It belongs to the protein-tyrosine phosphatase family. Receptor class 3 subfamily. As to quaternary structure, homodimer; disulfide-linked. Interacts with LCK. Interacts (phosphorylated form) with GRB2 (via SH2 domain). Interacts (phosphorylated form) with FYN (via SH2 domain). Interacts (via extracellular domain) with CEACAM20 (via extracellular domain); the interaction dephosphorylates CEACAM20. Expressed at high levels in the brain, spleen and liver and at lower levels in the heart and stomach. Expressed in pancreatic and colorectal cancer cells, but not in normal pancreas or colon. Expression in hepatocellular carcinoma is related to the differentiation status of the tumor and expression is inversely related to tumor aggressiveness.

It localises to the cell projection. Its subcellular location is the microvillus membrane. It is found in the apical cell membrane. The protein resides in the cytoplasm. It catalyses the reaction O-phospho-L-tyrosyl-[protein] + H2O = L-tyrosyl-[protein] + phosphate. Its activity is regulated as follows. Regulated by reversible dimerization. Dimerization reduces its catalytic activity. Protein phosphatase that may contribute to contact inhibition of cell growth and motility by mediating the dephosphorylation of focal adhesion-associated substrates and thus negatively regulating integrin-promoted signaling processes. Induces apoptotic cell death by at least two distinct mechanisms: inhibition of cell survival signaling mediated by PI 3-kinase, Akt, and ILK and activation of a caspase-dependent proapoptotic pathway. Inhibits the basal activity of LCK and its activation in response to TCR stimulation and TCR-induced activation of MAP kinase and surface expression of CD69. Inhibits TCR-induced tyrosine phosphorylation of LAT and ZAP70. Inhibits both basal activity of DOK1 and its CD2-induced tyrosine phosphorylation. Induces dephosphorylation of BCAR1, focal adhesion kinase and SRC. Reduces migratory activity of activity of Jurkat cells. Reduces tyrosine phosphorylation of CEACAM20 and thereby contributes to suppress the intestinal immune response CEACAM20. The protein is Receptor-type tyrosine-protein phosphatase H (PTPRH) of Homo sapiens (Human).